A 1432-amino-acid chain; its full sequence is Superkiller protein 3 (1432 aa).

2 TPR repeats span residues 4 to 37 (IKQLLKEAKQELTNRDYEETIEISEKVLKLDPDN) and 47 to 80 (ALSSLPASNNVSSNRNLERATNHYVSAAKLVPDN). The segment at 339–397 (SANKPPEGHKKTEKETDIKDVDETNEDEVKDRVEDEVKDRVEDEVKDQDEEAKEDEEED) is disordered. Residues 344 to 381 (PEGHKKTEKETDIKDVDETNEDEVKDRVEDEVKDRVED) are compositionally biased toward basic and acidic residues. A compositionally biased stretch (acidic residues) spans 382-397 (EVKDQDEEAKEDEEED). TPR repeat units lie at residues 425–458 (ILAHRILCQYYLLTKEYEAALPYIKNGISLIAYN), 471–507 (REFSLDLATVYTYVDAPKDHNAALKLYDNILSGDFSN), 508–541 (IQAKMGKGIIFIERKNWKDAMTLLTQVHEQSPNN), 627–661 (APGFSTLGDIYCHYYKDHLRAFKCYFKAFDLDAGD), 702–735 (NWPFRVVGIAHLEKQEESDSIEWFQSALRVDPND), 736–769 (VESWVGLGQAYHACGRIEASIKVFDKAIQLRPSH), 945–985 (ASYW…QSNT), 987–1018 (ETWIGLGIATMDINFRVSQHCFIKATALEPKA), and 1226–1259 (ISNHICLGLSYFFLNDFDQTLNQFQELLSISKDS).

Belongs to the SKI3 family. In terms of assembly, component of the SKI complex composed of at least SKI2, SKI3 and SKI8. The SKI complex interacts with SKI7, which makes the link between the SKI complex and the exosome in order to perform mRNA degradation.

Its subcellular location is the cytoplasm. It localises to the nucleus. Functionally, component of the SKI complex involved in 3'-mRNA degradation pathway. Represses dsRNA virus propagation by specifically blocking translation of viral mRNAs, perhaps recognizing the absence of CAP or poly(A). Essential for cell growth only in the presence of M1 replicon. The polypeptide is Superkiller protein 3 (SKI3) (Saccharomyces cerevisiae (strain ATCC 204508 / S288c) (Baker's yeast)).